The chain runs to 82 residues: Small ribosomal subunit protein uS17 (82 aa).

This sequence belongs to the universal ribosomal protein uS17 family. In terms of assembly, part of the 30S ribosomal subunit.

One of the primary rRNA binding proteins, it binds specifically to the 5'-end of 16S ribosomal RNA. This Rhodopseudomonas palustris (strain BisA53) protein is Small ribosomal subunit protein uS17.